A 561-amino-acid chain; its full sequence is Zinc finger protein 394 (561 aa).

Residues 1-61 (MNSSLTAQRR…NYPAASPDPE (61 aa)) are disordered. Ser-12 is subject to Phosphoserine. A Glycyl lysine isopeptide (Lys-Gly) (interchain with G-Cter in SUMO2) cross-link involves residue Lys-40. Positions 64-146 (RLHFRQLRYQ…AVVRALQRAL (83 aa)) constitute an SCAN box domain. Residues 155 to 230 (VTFEDTAVSL…LQEAFQGKRP (76 aa)) enclose the KRAB domain. Residues 182 to 201 (ESAQKDSGSTVPPSLESRVE) are disordered. Glycyl lysine isopeptide (Lys-Gly) (interchain with G-Cter in SUMO2) cross-links involve residues Lys-203 and Lys-228. The disordered stretch occupies residues 231 to 285 (LFSKCGSTHEDRVEKQSGDPLPLKLENSPEAEGLNSISDVNKNGSIEGEDSKNNE). A compositionally biased stretch (basic and acidic residues) spans 237-247 (STHEDRVEKQS). Residue Lys-254 forms a Glycyl lysine isopeptide (Lys-Gly) (interchain with G-Cter in SUMO2) linkage. A compositionally biased stretch (polar residues) spans 265 to 274 (NSISDVNKNG). Lys-282 participates in a covalent cross-link: Glycyl lysine isopeptide (Lys-Gly) (interchain with G-Cter in SUMO2). 7 C2H2-type zinc fingers span residues 358 to 380 (YKCG…QRIH), 386 to 408 (YGCQ…QRTH), 414 to 436 (YTCL…QSTH), 442 to 463 (FKCE…QRLH), 469 to 491 (YKCE…HRIH), 497 to 519 (YGCS…QRIH), and 525 to 547 (YKCL…QRIH). A Glycyl lysine isopeptide (Lys-Gly) (interchain with G-Cter in SUMO2) cross-link involves residue Lys-443.

The protein belongs to the krueppel C2H2-type zinc-finger protein family.

It is found in the nucleus. Its function is as follows. May be involved in transcriptional regulation. This chain is Zinc finger protein 394 (ZNF394), found in Homo sapiens (Human).